A 76-amino-acid polypeptide reads, in one-letter code: RNA-binding protein KhpA (76 aa).

One can recognise a KH domain in the interval 30–76 (GEVLEVRVNPEDLGRVIGRSGRTAKALRTLVTALADGRRVRVDVVDD).

It belongs to the KhpA RNA-binding protein family.

It is found in the cytoplasm. A probable RNA-binding protein. This Leifsonia xyli subsp. xyli (strain CTCB07) protein is RNA-binding protein KhpA.